We begin with the raw amino-acid sequence, 1194 residues long: Cohesin subunit SA-2 (1194 aa).

Residues 224-309 (FVHRYRDAIA…SRFKDRIVSM (86 aa)) form the SCD domain. The segment at 986-1027 (DTMSVMSGMSGRGSSTRSKKIKPPTGKRKLPEAEESSSSDSM) is disordered. The span at 988–1001 (MSVMSGMSGRGSST) shows a compositional bias: low complexity. A compositionally biased stretch (basic residues) spans 1002-1013 (RSKKIKPPTGKR).

Belongs to the SCC3 family. As to quaternary structure, part of the cohesin complex which is composed of a heterodimer between a SMC1 protein (SMC1A or SMC1B) and SMC3, which are attached via their hinge domain, and RAD21 which link them at their heads, and one STAG protein (STAG1, STAG2 or STAG3). In cohesin complexes, STAG2 is mutually exclusive with STAG1 and STAG3. Interacts directly with RAD21 in cohesin complex. Phosphorylated by PLK1. The large dissociation of cohesin from chromosome arms during prophase is partly due to its phosphorylation.

It is found in the nucleus. It localises to the chromosome. The protein localises to the centromere. Its function is as follows. Component of cohesin complex, a complex required for the cohesion of sister chromatids after DNA replication. The cohesin complex apparently forms a large proteinaceous ring within which sister chromatids can be trapped. At anaphase, the complex is cleaved and dissociates from chromatin, allowing sister chromatids to segregate. The cohesin complex may also play a role in spindle pole assembly during mitosis. The sequence is that of Cohesin subunit SA-2 (stag2) from Xenopus laevis (African clawed frog).